The primary structure comprises 489 residues: ATP synthase subunit beta 1 (489 aa).

159–166 (GGAGVGKT) is an ATP binding site. Residues 465 to 477 (EKSKKAAEDKPKA) show a composition bias toward basic and acidic residues. The segment at 465-489 (EKSKKAAEDKPKAEEDEDATSLHDA) is disordered.

Belongs to the ATPase alpha/beta chains family. As to quaternary structure, F-type ATPases have 2 components, CF(1) - the catalytic core - and CF(0) - the membrane proton channel. CF(1) has five subunits: alpha(3), beta(3), gamma(1), delta(1), epsilon(1). CF(0) has three main subunits: a(1), b(2) and c(9-12). The alpha and beta chains form an alternating ring which encloses part of the gamma chain. CF(1) is attached to CF(0) by a central stalk formed by the gamma and epsilon chains, while a peripheral stalk is formed by the delta and b chains.

The protein resides in the cell inner membrane. It catalyses the reaction ATP + H2O + 4 H(+)(in) = ADP + phosphate + 5 H(+)(out). Functionally, produces ATP from ADP in the presence of a proton gradient across the membrane. The catalytic sites are hosted primarily by the beta subunits. The protein is ATP synthase subunit beta 1 of Marinomonas sp. (strain MWYL1).